Here is a 375-residue protein sequence, read N- to C-terminus: Chanoclavine-I aldehyde reductase ifgG (375 aa).

FMN-binding positions include 31–33 (PTT), alanine 66, glutamine 108, and histidine 176. Histidine 176 and asparagine 179 together coordinate substrate. The Proton donor role is filled by tyrosine 181. Residues lysine 228, glycine 300, 325–326 (GR), and arginine 326 contribute to the FMN site. Tyrosine 353 provides a ligand contact to substrate.

The protein belongs to the NADH:flavin oxidoreductase/NADH oxidase family. FMN serves as cofactor.

The enzyme catalyses dihydrochanoclavine-I aldehyde + NADP(+) = chanoclavine-I aldehyde + NADPH + H(+). Its pathway is alkaloid biosynthesis; ergot alkaloid biosynthesis. In terms of biological role, chanoclavine-I aldehyde reductase; part of the gene cluster that mediates the biosynthesis of isofumigaclavines, fungal ergot alkaloids. The tryptophan dimethylallyltransferase ifgA catalyzes the first step of ergot alkaloid biosynthesis by condensing dimethylallyl diphosphate (DMAP) and tryptophan to form 4-dimethylallyl-L-tryptophan. The second step is catalyzed by the methyltransferase ifgB that methylates 4-dimethylallyl-L-tryptophan in the presence of S-adenosyl-L-methionine, resulting in the formation of N-methyl-dimethylallyl-L-tryptophan. The catalase ifgD and the FAD-dependent oxidoreductase ifgC then transform N-methyl-dimethylallyl-L-tryptophan to chanoclavine-I which is further oxidized by ifgE in the presence of NAD(+), resulting in the formation of chanoclavine-I aldehyde. The chanoclavine-I aldehyde reductases ifgG and/or fgaOx3 reduce chanoclavine-I aldehyde to dihydrochanoclavine-I aldehyde that spontaneously dehydrates to form 6,8-dimethyl-6,7-didehydroergoline. The festuclavine dehydrogenases ifgF1 and/or ifgF2 then catalyze the reduction of 6,8-dimethyl-6,7-didehydroergoline to form festuclavine. Hydrolysis of festuclavine by a yet undetermined cytochrome P450 monooxygenase (called ifgH) then leads to the formation of isofumigaclavine B which is in turn acetylated by ifgI to isofumigaclavine A. Penicillium roqueforti has interestingly at least two sets of genes for the consumption of chanoclavine-I aldehyde on three different loci, the OYEs ifgG/fgaOx3 and the festuclavine synthase homologs ifgF1/ifgF2. The reason for the duplication of these genes is unclear, probably to ensure the conversion of chanoclavine-I aldehyde by differential gene expression under various environmental conditions. The polypeptide is Chanoclavine-I aldehyde reductase ifgG (Penicillium roqueforti (strain FM164)).